Reading from the N-terminus, the 786-residue chain is Ribosome biogenesis protein BOP1 homolog (786 aa).

Positions 1–11 (MTKKLTIKRKV) are enriched in basic residues. The disordered stretch occupies residues 1-161 (MTKKLTIKRK…DSDTSDEEDI (161 aa)). 4 stretches are compositionally biased toward acidic residues: residues 28-37 (DNEEEEEEDL), 46-55 (EDSTDDEGID), 62-74 (SSED…DEEG), and 86-103 (SGDD…EDDA). The span at 104 to 113 (DAKKSSKNND) shows a compositional bias: basic and acidic residues. Acidic residues predominate over residues 151 to 160 (ADSDTSDEED). WD repeat units lie at residues 447-488 (GHTD…RTIE), 490-528 (EDVV…KLLV), 572-614 (THFK…SQIP), 617-655 (KSKG…LIKK), 658-697 (TNSK…KPYQ), 701-740 (LHRN…DLLQ), and 756-786 (REEF…RLFT).

Belongs to the WD repeat BOP1/ERB1 family.

It is found in the nucleus. Its subcellular location is the nucleolus. The protein resides in the nucleoplasm. Its function is as follows. Required for maturation of ribosomal RNAs and formation of the large ribosomal subunit. In Drosophila pseudoobscura pseudoobscura (Fruit fly), this protein is Ribosome biogenesis protein BOP1 homolog.